Reading from the N-terminus, the 580-residue chain is Zinc finger protein 271 (580 aa).

C2H2-type zinc fingers lie at residues 78 to 100 (YNCD…QRTH), 104 to 126 (YECE…QRIH), 132 to 154 (YPCS…QRVH), 160 to 182 (YKCD…QRIH), 188 to 210 (YQCS…LRIH), 216 to 238 (YMCN…QRIH), 244 to 266 (YKCD…QRIH), 272 to 294 (YPCA…RRIH), 300 to 322 (YKCS…QRIH), 328 to 350 (YPCN…QRIH), 356 to 378 (YPCS…YRIH), 384 to 406 (YECD…QRIH), 412 to 434 (YPCN…QRVH), 440 to 462 (YTCN…QRVH), 468 to 490 (YHCS…HRVH), 496 to 518 (YACT…QRIH), 524 to 545 (YKCM…QRIH), and 551 to 573 (YPCA…QRVH).

This sequence belongs to the krueppel C2H2-type zinc-finger protein family. As to expression, selectively expressed in adult testis.

Its subcellular location is the nucleus. May act to control gene activity during the pachytene stage of meiotic prophase. May function as a transcription activator. This chain is Zinc finger protein 271 (Znf271), found in Mus musculus (Mouse).